The following is an 84-amino-acid chain: MSSGNISNLPARRPFMRRRKVCPFSGENAPAIDFKDPKLLLRYMSERGKIVPSRITAVSAKKQRELARAIKRARQLALLPYVVD.

This sequence belongs to the bacterial ribosomal protein bS18 family. In terms of assembly, part of the 30S ribosomal subunit. Forms a tight heterodimer with protein bS6.

Binds as a heterodimer with protein bS6 to the central domain of the 16S rRNA, where it helps stabilize the platform of the 30S subunit. This chain is Small ribosomal subunit protein bS18, found in Maricaulis maris (strain MCS10) (Caulobacter maris).